The primary structure comprises 99 residues: Cell division protein FtsB (99 aa).

Over 1–3 (MKF) the chain is Cytoplasmic. A helical membrane pass occupies residues 4 to 21 (FVIALIVLLGLLQYRLWS). At 22–99 (GSNSLPEYFV…GERSVSSPSQ (78 aa)) the chain is on the periplasmic side. Residues 36-73 (IAVQQEGNDKLNERNQVLKEEIIDLKSGTEAIEERARN) are a coiled coil.

It belongs to the FtsB family. As to quaternary structure, part of a complex composed of FtsB, FtsL and FtsQ.

Its subcellular location is the cell inner membrane. Functionally, essential cell division protein. May link together the upstream cell division proteins, which are predominantly cytoplasmic, with the downstream cell division proteins, which are predominantly periplasmic. This chain is Cell division protein FtsB, found in Shewanella sp. (strain W3-18-1).